Consider the following 503-residue polypeptide: Cobyric acid synthase (503 aa).

In terms of domain architecture, GATase cobBQ-type spans 255 to 444 (DIDIAVIRYP…FHDLFHNDAF (190 aa)). The active-site Nucleophile is the Cys-337. Residue His-436 is part of the active site.

Belongs to the CobB/CobQ family. CobQ subfamily.

The protein operates within cofactor biosynthesis; adenosylcobalamin biosynthesis. Catalyzes amidations at positions B, D, E, and G on adenosylcobyrinic A,C-diamide. NH(2) groups are provided by glutamine, and one molecule of ATP is hydrogenolyzed for each amidation. The protein is Cobyric acid synthase of Geobacillus sp. (strain WCH70).